The chain runs to 192 residues: Ion-translocating oxidoreductase complex subunit A (192 aa).

6 helical membrane passes run 5–25, 39–59, 63–83, 102–122, 134–154, and 171–191; these read ILLIIGTALINNFVLVKFLGL, VGMGLATMFVLTVASLCAYLV, ILIPLNATFLRTLVFILVIAV, LLGIFLPLITTNCAVLGVALL, VVYGFGASLGFSLVLVLFAAL, and SIALITAGLMSLAFMGFTGLV.

The protein belongs to the NqrDE/RnfAE family. As to quaternary structure, the complex is composed of six subunits: RnfA, RnfB, RnfC, RnfD, RnfE and RnfG.

Its subcellular location is the cell inner membrane. In terms of biological role, part of a membrane-bound complex that couples electron transfer with translocation of ions across the membrane. This is Ion-translocating oxidoreductase complex subunit A from Haemophilus influenzae (strain ATCC 51907 / DSM 11121 / KW20 / Rd).